We begin with the raw amino-acid sequence, 358 residues long: Protein RecA (358 aa).

66–73 contacts ATP; it reads GPESSGKT.

The protein belongs to the RecA family.

The protein localises to the cytoplasm. Can catalyze the hydrolysis of ATP in the presence of single-stranded DNA, the ATP-dependent uptake of single-stranded DNA by duplex DNA, and the ATP-dependent hybridization of homologous single-stranded DNAs. It interacts with LexA causing its activation and leading to its autocatalytic cleavage. This Herpetosiphon aurantiacus (strain ATCC 23779 / DSM 785 / 114-95) protein is Protein RecA.